The chain runs to 886 residues: Protein suppressor of hairy wing (886 aa).

Disordered regions lie at residues 24-62 (SVSP…GIKG) and 167-211 (DEVV…KNSG). Residues 184 to 201 (VTEEEEEEEEDDLDEEGD) show a composition bias toward acidic residues. Residues 221 to 243 (HVCGKCYKTFRRLMSLKKHLEFC) form a C2H2-type 1; atypical zinc finger. A C2H2-type 2 zinc finger spans residues 291 to 314 (INCPDCPKSFKTQTSYERHIFITH). The segment at 320 to 342 (YPCSICNANLRSEALLKLHEEQH) adopts a C2H2-type 3; atypical zinc-finger fold. 9 consecutive C2H2-type zinc fingers follow at residues 349-367 (YACK…LKRH), 381-403 (MSCK…LKHH), 414-436 (YMCH…IRTH), 442-464 (FDCD…RRYH), 470-492 (YSCT…MKRH), 498-520 (HKCE…SKTH), 524-546 (FACD…VKEH), 554-578 (FSCT…AGDH), and 600-623 (TDCA…RSVH). Residues 571–587 (QHMDAGDHSEKSGEKPQ) show a composition bias toward basic and acidic residues. The segment at 571–594 (QHMDAGDHSEKSGEKPQRAKRSST) is disordered.

It is found in the nucleus. Component of the gypsy chromatin insulator complex which is required for the function of the gypsy chromatin insulator and other endogenous chromatin insulators. Chromatin insulators are regulatory elements which establish independent domains of transcriptional activity within eukaryotic genomes. Insulators have two defining properties; they can block the communication between an enhancer and a promoter when placed between them and can also buffer transgenes from position effect variegation (PEV). Insulators are proposed to structure the chromatin fiber into independent domains of differing transcriptional potential by promoting the formation of distinct chromatin loops. This chromatin looping may involve the formation of insulator bodies, where homotypic interactions between individual subunits of the insulator complex could promote the clustering of widely spaced insulators at the nuclear periphery. Within the gypsy insulator complex, this protein binds specifically to a region of the gypsy element located 3' of the 5' long terminal repeat (LTR), and may also mediate interaction with other endogenous insulators at sites distinct from those recognized by Cp190. Cooperates with pita and cliff to recruit Cp190 and regulate insulator function at the front-ultraabdominal (Fub) boundary. This chain is Protein suppressor of hairy wing (su(Hw)), found in Drosophila ananassae (Fruit fly).